Here is a 138-residue protein sequence, read N- to C-terminus: Sporulation-specific protein 13 (138 aa).

Residues 1 to 11 (MMSNSQISKLF) show a composition bias toward polar residues. Residues 1 to 31 (MMSNSQISKLFSSISNKENSNENALKESTNK) are disordered. Residues 12 to 23 (SSISNKENSNEN) are compositionally biased toward low complexity. Residues 16–104 (NKENSNENAL…KRELDYLRAK (89 aa)) adopt a coiled-coil conformation.

As to quaternary structure, interacts with spo2.

It is found in the cytoplasm. Its subcellular location is the cytoskeleton. It localises to the microtubule organizing center. The protein localises to the spindle pole body. In terms of biological role, involved in sporulation. Plays a significant role in modification of the spindle pole body prior to spore formation and is required for initiating forespore membrane formation. The chain is Sporulation-specific protein 13 (spo13) from Schizosaccharomyces pombe (strain 972 / ATCC 24843) (Fission yeast).